The primary structure comprises 1431 residues: DNA-directed RNA polymerase subunit beta' (1431 aa).

Residues Cys-66, Cys-68, Cys-81, and Cys-84 each coordinate Zn(2+). 3 residues coordinate Mg(2+): Asp-470, Asp-472, and Asp-474. Residues Cys-813, Cys-887, Cys-894, and Cys-897 each coordinate Zn(2+).

Belongs to the RNA polymerase beta' chain family. The RNAP catalytic core consists of 2 alpha, 1 beta, 1 beta' and 1 omega subunit. When a sigma factor is associated with the core the holoenzyme is formed, which can initiate transcription. Mg(2+) serves as cofactor. Requires Zn(2+) as cofactor.

The catalysed reaction is RNA(n) + a ribonucleoside 5'-triphosphate = RNA(n+1) + diphosphate. Functionally, DNA-dependent RNA polymerase catalyzes the transcription of DNA into RNA using the four ribonucleoside triphosphates as substrates. The polypeptide is DNA-directed RNA polymerase subunit beta' (Parabacteroides distasonis (strain ATCC 8503 / DSM 20701 / CIP 104284 / JCM 5825 / NCTC 11152)).